Here is a 166-residue protein sequence, read N- to C-terminus: Polyadenylate-binding protein 2 (166 aa).

The RRM domain maps to 55-132 (QSVYVGNVDY…RPLKVTPKRT (78 aa)). Residues 129–166 (PKRTNVPGMSRGRGRGRGRGRGRGRGGYRGRARGFAPY) form a disordered region. Over residues 140–160 (GRGRGRGRGRGRGRGGYRGRA) the composition is skewed to basic residues.

The protein localises to the nucleus. The protein is Polyadenylate-binding protein 2 (pab2) of Schizosaccharomyces pombe (strain 972 / ATCC 24843) (Fission yeast).